Reading from the N-terminus, the 529-residue chain is Tyrosine--tRNA ligase, cytoplasmic (529 aa).

Y39 lines the L-tyrosine pocket. Positions 44–52 (TTGKPHVAY) match the 'HIGH' region motif. Residues Y166, Q170, D173, and Q188 each contribute to the L-tyrosine site. Residues 222–226 (KMSSS) carry the 'KMSKS' region motif. The Nuclear localization signal signature appears at 242–247 (KKKLKK). The disordered stretch occupies residues 335 to 362 (KLTSSAYPEPSKNKGGVKGNPKQTTDDD). The tRNA-binding domain maps to 365–469 (IPSRLDIRVG…EGSAAGDRVY (105 aa)).

The protein belongs to the class-I aminoacyl-tRNA synthetase family. As to quaternary structure, homodimer.

The protein localises to the cytoplasm. Its subcellular location is the nucleus. The enzyme catalyses tRNA(Tyr) + L-tyrosine + ATP = L-tyrosyl-tRNA(Tyr) + AMP + diphosphate + H(+). Catalyzes the attachment of tyrosine to tRNA(Tyr) in a two-step reaction: tyrosine is first activated by ATP to form Tyr-AMP and then transferred to the acceptor end of tRNA(Tyr). This chain is Tyrosine--tRNA ligase, cytoplasmic (yars1), found in Danio rerio (Zebrafish).